We begin with the raw amino-acid sequence, 260 residues long: Flagellar basal-body rod protein FlgG (260 aa).

Belongs to the flagella basal body rod proteins family. The basal body constitutes a major portion of the flagellar organelle and consists of four rings (L,P,S, and M) mounted on a central rod. The rod consists of about 26 subunits of FlgG in the distal portion, and FlgB, FlgC and FlgF are thought to build up the proximal portion of the rod with about 6 subunits each.

The protein resides in the bacterial flagellum basal body. The chain is Flagellar basal-body rod protein FlgG (flgG) from Salmonella typhi.